The primary structure comprises 153 residues: 3-dehydroquinate dehydratase (153 aa).

Residue Y26 is the Proton acceptor of the active site. The substrate site is built by N77, H83, and D90. H103 functions as the Proton donor in the catalytic mechanism. Residues 104–105 and R114 each bind substrate; that span reads LS.

The protein belongs to the type-II 3-dehydroquinase family. In terms of assembly, homododecamer.

The enzyme catalyses 3-dehydroquinate = 3-dehydroshikimate + H2O. It functions in the pathway metabolic intermediate biosynthesis; chorismate biosynthesis; chorismate from D-erythrose 4-phosphate and phosphoenolpyruvate: step 3/7. Functionally, catalyzes a trans-dehydration via an enolate intermediate. The chain is 3-dehydroquinate dehydratase from Colwellia psychrerythraea (strain 34H / ATCC BAA-681) (Vibrio psychroerythus).